A 159-amino-acid chain; its full sequence is Putative viral CXC chemokine 2 (159 aa).

2 disulfides stabilise this stretch: Cys50–Cys77 and Cys52–Cys93.

The protein belongs to the intercrine alpha (chemokine CxC) family.

The protein is Putative viral CXC chemokine 2 (UL147) of Human cytomegalovirus (strain Merlin) (HHV-5).